Consider the following 425-residue polypeptide: L-lysine 2,3-aminomutase (425 aa).

The 213-residue stretch at 113-325 folds into the Radical SAM core domain; sequence HRYPDRVLLL…GLRGHTSGYA (213 aa). [4Fe-4S] cluster is bound by residues cysteine 127, cysteine 131, and cysteine 134. Lysine 339 is modified (N6-(pyridoxal phosphate)lysine).

This sequence belongs to the radical SAM superfamily. KamA family. In terms of assembly, homotetramer. [4Fe-4S] cluster serves as cofactor. Requires pyridoxal 5'-phosphate as cofactor.

It catalyses the reaction L-lysine = (3S)-3,6-diaminohexanoate. Its pathway is amino-acid degradation; L-lysine degradation via acetate pathway. Catalyzes the interconversion of L-alpha-lysine and L-beta-lysine. In Fusobacterium nucleatum subsp. nucleatum (strain ATCC 25586 / DSM 15643 / BCRC 10681 / CIP 101130 / JCM 8532 / KCTC 2640 / LMG 13131 / VPI 4355), this protein is L-lysine 2,3-aminomutase.